We begin with the raw amino-acid sequence, 335 residues long: Putative SWIB domain-containing protein R508 (335 aa).

Over residues 1 to 12 (MSKRVTSSKKSK) the composition is skewed to basic residues. The disordered stretch occupies residues 1 to 182 (MSKRVTSSKK…NKKSPKKLLN (182 aa)). Residues 24–33 (KNLSKTSKSV) show a composition bias toward low complexity. Positions 60-75 (NIGGSKSSRTYNSEGS) are enriched in polar residues. The segment covering 83 to 109 (SSKDSKVIKKNKQKVESSDSEKHSENK) has biased composition (basic and acidic residues). A compositionally biased stretch (basic residues) spans 110 to 126 (SHKKSSKSSSISRKKPI). Residues 163–173 (KGEDNNDEKQN) show a composition bias toward basic and acidic residues. The stretch at 181–217 (LNEKKISSESFDDKLNELREELRENYIRQKKIMNDIK) forms a coiled coil. The region spanning 244 to 326 (GFNKPQTVPQ…QTWLKKVYNE (83 aa)) is the SWIB/MDM2 domain.

The protein is Putative SWIB domain-containing protein R508 of Acanthamoeba polyphaga mimivirus (APMV).